A 154-amino-acid chain; its full sequence is UPF0260 protein NTHI1811 (154 aa).

This sequence belongs to the UPF0260 family.

The chain is UPF0260 protein NTHI1811 from Haemophilus influenzae (strain 86-028NP).